Consider the following 181-residue polypeptide: MSNMVPVMDKKAFLRSFLKRHQLKRRECAWLLNYLMNDDTLMERVHFLNHSEGTPKALVISAQGIEQIPFSFRKKHHVTTDCEKAFHDIRLNQTEDIYIELHFQERLTCPQYLAVLEDNPYLPETQERAQAFERKAEALLQESVRLFQLKKLSEAIDEALDNGDKETFMELSEQLNRLRKS.

Belongs to the UPF0302 family.

The polypeptide is UPF0302 protein ABC1905 (Shouchella clausii (strain KSM-K16) (Alkalihalobacillus clausii)).